A 370-amino-acid polypeptide reads, in one-letter code: Pyruvate dehydrogenase E1 component subunit alpha (370 aa).

As to quaternary structure, heterodimer of an alpha and a beta chain. Thiamine diphosphate serves as cofactor.

It carries out the reaction N(6)-[(R)-lipoyl]-L-lysyl-[protein] + pyruvate + H(+) = N(6)-[(R)-S(8)-acetyldihydrolipoyl]-L-lysyl-[protein] + CO2. In terms of biological role, the pyruvate dehydrogenase complex catalyzes the overall conversion of pyruvate to acetyl-CoA and CO(2). It contains multiple copies of three enzymatic components: pyruvate dehydrogenase (E1), dihydrolipoamide acetyltransferase (E2) and lipoamide dehydrogenase (E3). The protein is Pyruvate dehydrogenase E1 component subunit alpha (pdhA) of Staphylococcus epidermidis (strain ATCC 35984 / DSM 28319 / BCRC 17069 / CCUG 31568 / BM 3577 / RP62A).